The sequence spans 95 residues: MSVDLATVKRVARLARIAVSDEEAERMTGELNGILGFVEQLSEVNVDGVEPMTSVMPMEMKKRDDIVADGDKAADIVANAPNSDRDFFLVPKVVE.

Belongs to the GatC family. As to quaternary structure, heterotrimer of A, B and C subunits.

The catalysed reaction is L-glutamyl-tRNA(Gln) + L-glutamine + ATP + H2O = L-glutaminyl-tRNA(Gln) + L-glutamate + ADP + phosphate + H(+). The enzyme catalyses L-aspartyl-tRNA(Asn) + L-glutamine + ATP + H2O = L-asparaginyl-tRNA(Asn) + L-glutamate + ADP + phosphate + 2 H(+). In terms of biological role, allows the formation of correctly charged Asn-tRNA(Asn) or Gln-tRNA(Gln) through the transamidation of misacylated Asp-tRNA(Asn) or Glu-tRNA(Gln) in organisms which lack either or both of asparaginyl-tRNA or glutaminyl-tRNA synthetases. The reaction takes place in the presence of glutamine and ATP through an activated phospho-Asp-tRNA(Asn) or phospho-Glu-tRNA(Gln). The protein is Aspartyl/glutamyl-tRNA(Asn/Gln) amidotransferase subunit C of Sinorhizobium fredii (strain NBRC 101917 / NGR234).